Here is a 332-residue protein sequence, read N- to C-terminus: Protein FAM131B (332 aa).

The interval 1 to 22 (MDSTSSLHGSSLHRPSTEQTRT) is disordered. A phosphoserine mark is found at Ser-47, Ser-114, and Ser-117. The interval 221-332 (LGPAFDDSQP…FDEEEGDANN (112 aa)) is disordered. 2 stretches are compositionally biased toward basic and acidic residues: residues 272–281 (PVEEEKRPLA) and 288–302 (AGCR…REDP). 3 positions are modified to phosphoserine: Ser-295, Ser-297, and Ser-313. A Phosphothreonine modification is found at Thr-316. Residues Ser-317, Ser-318, and Ser-322 each carry the phosphoserine modification. Residues 323-332 (FDEEEGDANN) show a composition bias toward acidic residues.

It belongs to the FAM131 family.

This Rattus norvegicus (Rat) protein is Protein FAM131B (Fam131b).